Reading from the N-terminus, the 89-residue chain is ATP synthase subunit e, mitochondrial (89 aa).

At Ser-1 the chain carries N-acetylserine. Residues 8–25 (YSSLAAGIVYGAYHTYTL) traverse the membrane as a helical segment.

As to quaternary structure, F-type ATP synthases have 2 components, the catalytic core F(1) and the membrane-embedded component F(0), linked together by a central stalk and a peripheral stalk. The central stalk, also called rotor shaft, is often seen as part of F(1). The peripheral stalk is seen as part of F(0). F(0) contains the membrane channel next to the rotor. F-type ATP synthases form dimers but each monomer functions independently in ATP generation. The dimer consists of 18 different polypeptides: ATP1 (subunit alpha, part of F(1), 3 molecules per monomer), ATP2 (subunit beta, part of F(1), 3 molecules per monomer), ATP3 (subunit gamma, part of the central stalk), ATP4 (subunit b, part of the peripheral stalk), ATP5/OSCP (subunit 5/OSCP, part of the peripheral stalk), ATP6 (subunit a, part of the peripheral stalk), ATP7 (subunit d, part of the peripheral stalk), ATP8 (subunit 8, part of the peripheral stalk), OLI1 (subunit c, part of the rotor, 10 molecules per monomer), ATP14 (subunit h, part of the peripheral stalk), ATP15 (subunit epsilon, part of the central stalk), ATP16 (subunit delta, part of the central stalk), ATP17 (subunit f, part of the peripheral stalk), ATP18 (subunit i/j, part of the peripheral stalk). Dimer-specific subunits are ATP19 (subunit k, at interface between monomers), ATP20 (subunit g, at interface between monomers), TIM11 (subunit e, at interface between monomers). Also contains subunit L.

It localises to the mitochondrion inner membrane. In terms of biological role, mitochondrial membrane ATP synthase (F(1)F(0) ATP synthase or Complex V) produces ATP from ADP in the presence of a proton gradient across the membrane which is generated by electron transport complexes of the respiratory chain. F-type ATP synthases consist of two structural domains, F(1) - containing the extramembraneous catalytic core, and F(0) - containing the membrane proton channel, linked together by a central stalk and a peripheral stalk. During catalysis, ATP synthesis in the catalytic domain of F(1) is coupled via a rotary mechanism of the central stalk subunits to proton translocation. Part of the complex F(0) domain. Minor subunit located with subunit a/ATP6 in the membrane. Together with subunit g/ATP20, probably contributes to membrane curvature at the site of the ATP synthase dimer, ultimately contributing to formation of cristae. The chain is ATP synthase subunit e, mitochondrial from Pichia angusta (Yeast).